Consider the following 140-residue polypeptide: uncharacterized protein (140 aa).

The next 2 helical transmembrane spans lie at 63–83 (LGFVHFSKWVELAWCFLTLAT) and 119–139 (ILLYLLICGVSLYGAIRIFIN).

The protein resides in the membrane. This is an uncharacterized protein from Schizosaccharomyces pombe (strain 972 / ATCC 24843) (Fission yeast).